The following is a 1378-amino-acid chain: Protein CLASP-1 (1378 aa).

An HEAT 1 repeat occupies Leu-168–Ile-206. Disordered regions lie at residues Arg-231–Leu-254, Ile-266–Ser-325, and Met-590–Pro-725. 2 stretches are compositionally biased toward low complexity: residues Ser-269–Thr-283 and Asn-610–Asn-619. 2 stretches are compositionally biased toward polar residues: residues Ile-620–Ala-630 and Ile-637–Ile-648. Residues Ser-664–Ser-676 show a composition bias toward low complexity. The segment covering Gly-677 to Lys-690 has biased composition (polar residues). Low complexity predominate over residues Thr-704–Thr-721. The stretch at Ala-740–Asp-767 forms a coiled coil. Positions Ile-775–Pro-784 are enriched in basic and acidic residues. The disordered stretch occupies residues Ile-775–Asn-823. A compositionally biased stretch (polar residues) spans Ser-786–Arg-812. The stretch at His-1305 to Val-1341 is one HEAT 2 repeat.

The protein belongs to the CLASP family.

It localises to the cytoplasm. The protein resides in the cytoskeleton. In terms of biological role, microtubule plus-end tracking protein that promotes the stabilization of dynamic microtubules. Operates redundantly with cls-2 and cls-3 in regulating microtubule processes which position the spindle during asymmetric cell division. The chain is Protein CLASP-1 (cls-1) from Caenorhabditis elegans.